The chain runs to 295 residues: Putative F-box protein At5g44220 (295 aa).

Residues 56–102 (STNSDLLPMDLIKEILKRLPAKTLARFLCVSKLWSSIIRSRDLMKLF) form the F-box domain.

The chain is Putative F-box protein At5g44220 from Arabidopsis thaliana (Mouse-ear cress).